Here is a 206-residue protein sequence, read N- to C-terminus: Probable GTP-binding protein EngB (206 aa).

Residues 23-195 form the EngB-type G domain; that stretch reads DLLEIAFVGR…WARIEAIMAE (173 aa). GTP is bound by residues 31-38, 58-62, 76-79, 143-146, and 174-176; these read GRSNVGKS, GRTQL, DLPG, TKCD, and FSA. Residues Ser-38 and Thr-60 each coordinate Mg(2+).

This sequence belongs to the TRAFAC class TrmE-Era-EngA-EngB-Septin-like GTPase superfamily. EngB GTPase family. Mg(2+) is required as a cofactor.

Functionally, necessary for normal cell division and for the maintenance of normal septation. This is Probable GTP-binding protein EngB from Geobacter sulfurreducens (strain ATCC 51573 / DSM 12127 / PCA).